Reading from the N-terminus, the 1369-residue chain is Rho guanine nucleotide exchange factor 10 (1369 aa).

The segment at 1–106 (MRPPGFLSRA…ETTPVAEPTK (106 aa)) is disordered. A compositionally biased stretch (acidic residues) spans 46–64 (NNEEEEGEQFDFDSGDEIP). The span at 83-100 (EAPAPTGGEDGAGAETTP) shows a compositional bias: low complexity. A Phosphoserine modification is found at Ser180. Residues 184–254 (EAETPEVTED…ENSDSEPDEM (71 aa)) are disordered. Positions 196–209 (PNSLSSEEPPTSED) are enriched in polar residues. The stretch at 304–355 (KKQLSHDLTRLKEHYEKKMRDLMASTVGVVEIQQLRQKHELKMQKLVKAAKD) forms a coiled coil. Ser379 carries the post-translational modification Phosphoserine. Residues 421 to 608 (VRRYILGSVV…ETLAEKLNER (188 aa)) enclose the DH domain. Disordered stretches follow at residues 1226-1260 (KDKS…LSQG) and 1277-1297 (QKSD…SSSL). Low complexity predominate over residues 1279–1296 (SDLSSSSGSLSLSHGSSS). Phosphoserine is present on Ser1287. Residue Gln1338 is modified to N5-methylglutamine.

Methylated at Gln-1338 by N6AMT1.

Its function is as follows. May play a role in developmental myelination of peripheral nerves. The chain is Rho guanine nucleotide exchange factor 10 (ARHGEF10) from Homo sapiens (Human).